Reading from the N-terminus, the 448-residue chain is Chaperone SurA (448 aa).

Positions 1-27 are cleaved as a signal peptide; sequence MKKTLRFAAVASGLVASLITVAPSASA. 2 consecutive PpiC domains span residues 185–288 and 301–399; these read QQDL…RLVE and IVQT…QVLG.

Its subcellular location is the periplasm. The enzyme catalyses [protein]-peptidylproline (omega=180) = [protein]-peptidylproline (omega=0). In terms of biological role, chaperone involved in the correct folding and assembly of outer membrane proteins. Recognizes specific patterns of aromatic residues and the orientation of their side chains, which are found more frequently in integral outer membrane proteins. May act in both early periplasmic and late outer membrane-associated steps of protein maturation. The chain is Chaperone SurA from Burkholderia mallei (strain ATCC 23344).